We begin with the raw amino-acid sequence, 222 residues long: Neurotrophic factor BDNF precursor form (222 aa).

A signal peptide spans 1–4 (CMKA). The propeptide occupies 5–113 (APMKEVSVRG…AANMSMRVRR (109 aa)). A glycan (N-linked (GlcNAc...) asparagine) is linked at Asn106. Cystine bridges form between Cys126–Cys193 and Cys171–Cys222.

It belongs to the NGF-beta family.

It is found in the secreted. Functionally, promotes the survival of neuronal populations that are all located either in the central nervous system or directly connected to it. This is Neurotrophic factor BDNF precursor form (BDNF) from Xenopeltis unicolor (Sunbeam snake).